The chain runs to 1235 residues: Receptor-type adenylate cyclase ESAG 4 (1235 aa).

The interval 1–20 is disordered; sequence MNMLHLSDRNASLAPSGGEH. Residues 1-32 lie on the Cytoplasmic side of the membrane; that stretch reads MNMLHLSDRNASLAPSGGEHSLPTGGAVCRDA. The chain crosses the membrane as a helical span at residues 33–53; that stretch reads MDILPVILRAPVALLLLLVVL. The Extracellular segment spans residues 54-858; that stretch reads PQLSVGAEAN…SNAGRISGAS (805 aa). N-linked (GlcNAc...) asparagine glycans are attached at residues N63, N90, N97, N362, N531, N566, N705, and N830. The helical transmembrane segment at 859-879 threads the bilayer; the sequence is LVGIIIGGALALFLVVALGVV. Residues 880–1235 are Cytoplasmic-facing; it reads PYFFLRNTVI…VSSQVEERLL (356 aa). In terms of domain architecture, Guanylate cyclase spans 900-1054; the sequence is TLIFTDIESS…RTSNMAARTE (155 aa). Residues D905 and D948 each coordinate Mg(2+).

It belongs to the adenylyl cyclase class-3 family. Mg(2+) is required as a cofactor.

Its subcellular location is the membrane. It carries out the reaction ATP = 3',5'-cyclic AMP + diphosphate. In terms of biological role, could act as a receptor for an unknown ligand. This is Receptor-type adenylate cyclase ESAG 4 (ESAG4) from Trypanosoma brucei brucei.